A 228-amino-acid polypeptide reads, in one-letter code: L-ribulose-5-phosphate 4-epimerase UlaF (228 aa).

Substrate-binding positions include 26–27 (GN), 43–44 (SG), and 72–73 (SS). Zn(2+) is bound by residues Asp74, His93, and His95. Asp118 serves as the catalytic Proton donor/acceptor. Residue His167 participates in Zn(2+) binding. The active-site Proton donor/acceptor is the Tyr225.

It belongs to the aldolase class II family. AraD/FucA subfamily. It depends on Zn(2+) as a cofactor.

The enzyme catalyses L-ribulose 5-phosphate = D-xylulose 5-phosphate. The protein operates within cofactor degradation; L-ascorbate degradation; D-xylulose 5-phosphate from L-ascorbate: step 4/4. Functionally, catalyzes the isomerization of L-ribulose 5-phosphate to D-xylulose 5-phosphate. Is involved in the anaerobic L-ascorbate utilization. The sequence is that of L-ribulose-5-phosphate 4-epimerase UlaF from Shigella dysenteriae serotype 1 (strain Sd197).